The primary structure comprises 506 residues: NADH-quinone oxidoreductase subunit N 2 (506 aa).

The next 14 membrane-spanning stretches (helical) occupy residues 11 to 31 (SLAY…LVVW), 44 to 64 (LVIL…YFLA), 82 to 102 (FSNL…LFLV), 117 to 137 (SGEL…MAAS), 140 to 160 (LLLI…LAGF), 175 to 195 (VIFG…IFGI), 222 to 242 (VFVG…AAPF), 254 to 274 (PTPV…AVLI), 289 to 309 (GVAT…MTVG), 323 to 345 (LAYS…SGAG), 356 to 376 (YCFM…ESGG), 394 to 414 (AAAM…AGFI), 419 to 439 (LFSA…VVGV), and 472 to 492 (LLGG…VYWG).

It belongs to the complex I subunit 2 family. NDH-1 is composed of 14 different subunits. Subunits NuoA, H, J, K, L, M, N constitute the membrane sector of the complex.

The protein localises to the cell inner membrane. It carries out the reaction a quinone + NADH + 5 H(+)(in) = a quinol + NAD(+) + 4 H(+)(out). NDH-1 shuttles electrons from NADH, via FMN and iron-sulfur (Fe-S) centers, to quinones in the respiratory chain. The immediate electron acceptor for the enzyme in this species is believed to be ubiquinone. Couples the redox reaction to proton translocation (for every two electrons transferred, four hydrogen ions are translocated across the cytoplasmic membrane), and thus conserves the redox energy in a proton gradient. In Sorangium cellulosum (strain So ce56) (Polyangium cellulosum (strain So ce56)), this protein is NADH-quinone oxidoreductase subunit N 2.